The primary structure comprises 517 residues: Splicing factor cactin (517 aa).

A compositionally biased stretch (basic and acidic residues) spans 1–14 (MAFRDSTRDFNRSR). A disordered region spans residues 1–59 (MAFRDSTRDFNRSRPEKRHASRSSSPRSFRPSNQNARANYNLPRVRDAMKEEERSRETK). Over residues 22-32 (RSSSPRSFRPS) the composition is skewed to low complexity. Over residues 44 to 59 (RVRDAMKEEERSRETK) the composition is skewed to basic and acidic residues.

Belongs to the CACTIN family. As to quaternary structure, interacts with sde2. Interacts with cdc5.

Plays a role in pre-mRNA splicing by facilitating excision of introns featuring long spacing between the branchpoint and 3'-splice site (ss). Recruited to the spliceosome by sde2, which may enable folding of the RNA between the BP and 3'-ss to guide the splice site towards the spliceosome's catalytic center. Assists the splicing of several components involved in chromatin organization. This chain is Splicing factor cactin, found in Schizosaccharomyces pombe (strain 972 / ATCC 24843) (Fission yeast).